Reading from the N-terminus, the 360-residue chain is MLLLLAEYLQQFHTGFAVVQYLTLRGILGVLTALILALCLGPWMIRTLQIRQIGQAVRDDGPQSHLSKKGTPTMGGALILSAIAISTLLWADLSNRYVWTVLAVTLLFGAIGWVDDYRKVIEKNSRGLPSRWKYFWQSVFGLGAALFLYMTAQTPAETTLILPLIKTIEIPLGAAFIVLTYFVIVGSSNAVNLTDGLDGLAIMPTVMVGGALGIFCYLSGNVKFAEYLLIPSVAGAGELIVFCGALIGAGLGFLWFNTYPAQVFMGDVGALALGAALGTIAVIVRQEVVLFIMGGVFVMETLSVMIQVASFKLTGKRVFRMAPIHHHFELKGWPEPRVIVRFWIITVVLVLIGLATLKLR.

A run of 10 helical transmembrane segments spans residues 25-45, 73-93, 97-117, 132-152, 167-187, 199-219, 236-256, 263-283, 288-308, and 338-358; these read RGILGVLTALILALCLGPWMI, TMGGALILSAIAISTLLWADL, YVWTVLAVTLLFGAIGWVDDY, WKYFWQSVFGLGAALFLYMTA, TIEIPLGAAFIVLTYFVIVGS, GLAIMPTVMVGGALGIFCYLS, AGELIVFCGALIGAGLGFLWF, VFMGDVGALALGAALGTIAVI, VVLFIMGGVFVMETLSVMIQV, and VIVRFWIITVVLVLIGLATLK.

It belongs to the glycosyltransferase 4 family. MraY subfamily. Requires Mg(2+) as cofactor.

The protein resides in the cell inner membrane. The enzyme catalyses UDP-N-acetyl-alpha-D-muramoyl-L-alanyl-gamma-D-glutamyl-meso-2,6-diaminopimeloyl-D-alanyl-D-alanine + di-trans,octa-cis-undecaprenyl phosphate = di-trans,octa-cis-undecaprenyl diphospho-N-acetyl-alpha-D-muramoyl-L-alanyl-D-glutamyl-meso-2,6-diaminopimeloyl-D-alanyl-D-alanine + UMP. It participates in cell wall biogenesis; peptidoglycan biosynthesis. Its function is as follows. Catalyzes the initial step of the lipid cycle reactions in the biosynthesis of the cell wall peptidoglycan: transfers peptidoglycan precursor phospho-MurNAc-pentapeptide from UDP-MurNAc-pentapeptide onto the lipid carrier undecaprenyl phosphate, yielding undecaprenyl-pyrophosphoryl-MurNAc-pentapeptide, known as lipid I. This chain is Phospho-N-acetylmuramoyl-pentapeptide-transferase, found in Azotobacter vinelandii (strain DJ / ATCC BAA-1303).